A 146-amino-acid polypeptide reads, in one-letter code: Hemoglobin subunit beta (146 aa).

Val-1 carries the N-acetylvaline modification. Positions His-2 to His-146 constitute a Globin domain. Thr-12 carries the phosphothreonine modification. Position 44 is a phosphoserine (Ser-44). The residue at position 59 (Lys-59) is an N6-acetyllysine. His-63 serves as a coordination point for heme b. Lys-82 carries the post-translational modification N6-acetyllysine. His-92 serves as a coordination point for heme b. Cys-93 carries the post-translational modification S-nitrosocysteine. Lys-144 bears the N6-acetyllysine mark.

This sequence belongs to the globin family. Heterotetramer of two alpha chains and two beta chains. As to expression, red blood cells.

Its function is as follows. Involved in oxygen transport from the lung to the various peripheral tissues. This Cephalopachus bancanus (Western tarsier) protein is Hemoglobin subunit beta (HBB).